Here is a 303-residue protein sequence, read N- to C-terminus: Crk-like protein (303 aa).

Residues 14–102 (WYMGPVTRQE…LDTTTLIEPA (89 aa)) enclose the SH2 domain. Positions 123–183 (ENLEYVRTLY…PVPYVEKLVR (61 aa)) constitute an SH3 1 domain. Tyrosine 127 is modified (phosphotyrosine). Residues 184-203 (SSPHGKHGNRNSNSYGIPEP) are disordered. The residue at position 207 (tyrosine 207) is a Phosphotyrosine. An SH3 2 domain is found at 235–296 (NGPVFAKAIQ…PFTHVKIFDP (62 aa)).

This sequence belongs to the CRK family. In terms of assembly, interacts with DOCK2 and EPOR. Interacts with phosphorylated CBLB and IRS4. Interacts with INPP5D/SHIP1. Interacts with BCAR1/CAS and NEDD9/HEF1. Post-translationally, phosphorylated on tyrosine. Phosphorylation is prominent during early development, but decreases at later embryonic stages and in newborn mice.

Functionally, may mediate the transduction of intracellular signals. The protein is Crk-like protein (Crkl) of Mus musculus (Mouse).